We begin with the raw amino-acid sequence, 57 residues long: UPF0391 membrane protein RPC_2356 (57 aa).

The next 2 helical transmembrane spans lie at 6–26 (WALI…TGIS) and 35–55 (ILFY…LTIF).

This sequence belongs to the UPF0391 family.

Its subcellular location is the cell membrane. The protein is UPF0391 membrane protein RPC_2356 of Rhodopseudomonas palustris (strain BisB18).